Here is a 791-residue protein sequence, read N- to C-terminus: Organellar oligopeptidase A, chloroplastic/mitochondrial (791 aa).

The transit peptide at 1-82 (MLMATPTSRA…SSPPSMSSAA (82 aa)) directs the protein to the chloroplast and mitochondrion. 2 coiled-coil regions span residues 118-138 (RPGI…LEKS) and 239-259 (DDEK…LSHK). Residue His-571 coordinates Zn(2+). Glu-572 is an active-site residue. Residues His-575 and Glu-601 each coordinate Zn(2+). Residue 703-709 (HIFAGGY) participates in substrate binding.

Belongs to the peptidase M3 family. Requires Zn(2+) as cofactor.

The protein localises to the mitochondrion matrix. Its subcellular location is the plastid. The protein resides in the chloroplast stroma. It catalyses the reaction Hydrolysis of oligopeptides, with broad specificity. Gly or Ala commonly occur as P1 or P1' residues, but more distant residues are also important, as is shown by the fact that Z-Gly-Pro-Gly-|-Gly-Pro-Ala is cleaved, but not Z-(Gly)(5).. Inhibited by salicylic acid. Functionally, oligopeptidase degrading short peptides from 8 to 23 amino acid residues. Plays a role in the degradation of transit peptides and of peptides derived from other proteolytic events. Does not exhibit a strict cleavage pattern. Binds salicylic acid. The sequence is that of Organellar oligopeptidase A, chloroplastic/mitochondrial from Arabidopsis thaliana (Mouse-ear cress).